The chain runs to 193 residues: Guanylate kinase (193 aa).

Residues 8-188 (GRLVVLVGPS…ACEQLVSLFV (181 aa)) form the Guanylate kinase-like domain. 15-22 (GPSAVGKS) is a binding site for ATP.

Belongs to the guanylate kinase family.

It is found in the cytoplasm. The enzyme catalyses GMP + ATP = GDP + ADP. Its function is as follows. Essential for recycling GMP and indirectly, cGMP. In Nocardia farcinica (strain IFM 10152), this protein is Guanylate kinase.